We begin with the raw amino-acid sequence, 1104 residues long: Transient receptor potential cation channel subfamily M member 8 (1104 aa).

The Cytoplasmic portion of the chain corresponds to 1-733 (MSFEGARLSM…LWYYVAFFTS (733 aa)). A helical transmembrane segment spans residues 734-758 (PFVVFSWNVVFYIAFLLLFAYVLLM). The Extracellular segment spans residues 759–765 (DFHSVPH). A helical membrane pass occupies residues 766–789 (TPELILYALVFVLFCDEVRQWYMN). Glu-782 and Gln-785 together coordinate Ca(2+). The Cytoplasmic portion of the chain corresponds to 790-796 (GVNYFTD). A helical membrane pass occupies residues 797–817 (LWNVMDTLGLFYFIAGIVFRL). Residues Asn-799 and Asp-802 each contribute to the Ca(2+) site. At 818-822 (HSSNK) the chain is on the extracellular side. Residues 823–848 (SSLYSGRVIFCLDYIIFTLRLIHIFT) traverse the membrane as a helical segment. At 849 to 853 (VSRNL) the chain is on the cytoplasmic side. A helical transmembrane segment spans residues 854 to 890 (GPKIIMLQRMLIDVFFFLFLFAVWMVAFGVARQGILR). Residues 891–895 (QNEQR) are Extracellular-facing. An intramembrane region (pore-forming) is located at residues 896–912 (WRWIFRSVIYEPYLAMF). Topologically, residues 913-953 (GQVPSDVDSTTYDFSHCTFSGNESKPLCVELDEYNLPRFPE) are extracellular. A helical transmembrane segment spans residues 954–984 (WITIPLVCIYMLSTNILLVNLLVAMFGYTVG). Residues 985–1104 (IVQENNDQVW…LLKEIANKIK (120 aa)) are Cytoplasmic-facing. Residues 1067–1104 (INTKANDNAEEMRHRFRQLDTKLNDLKGLLKEIANKIK) are a coiled coil.

It belongs to the transient receptor (TC 1.A.4) family. LTrpC subfamily. TRPM8 sub-subfamily. As to quaternary structure, homotetramer. Interacts (via N-terminus and C-terminus domains) with TCAF1; the interaction stimulates TRPM8 channel activity. Interacts (via N-terminus and C-terminus domains) with TCAF2; the interaction inhibits TRPM8 channel activity. As to expression, expressed in dorsal root and trigeminal ganglia. Specifically expressed in a subset of sensory neurons, including cold-sensitive neurons in trigeminal neurons.

Its subcellular location is the cell membrane. The protein localises to the membrane raft. The catalysed reaction is Ca(2+)(in) = Ca(2+)(out). It catalyses the reaction Na(+)(in) = Na(+)(out). The enzyme catalyses K(+)(in) = K(+)(out). Activated by cold temperatures and by both natural and synthetic cooling compounds such as menthol and icilin. Activation of the channel requires the presence of PI(4,5)P2; PI(4,5)P2 is necessary to gate the channel. Activated by intracellular Ca(2+). Its function is as follows. Non-selective ion channel permeable to monovalent and divalent cations, including Na(+), K(+), and Ca(2+), with higher permeability for Ca(2+). Activated by multiple factors, such as temperature, voltage, pressure, and changes in osmolality. Activated by cool temperatures (&lt;23-28 degrees Celsius) and by chemical ligands evoking a sensation of coolness, such as menthol and icilin, therefore plays a central role in the detection of environmental cold temperatures. TRPM8 is a voltage-dependent channel; its activation by cold or chemical ligands shifts its voltage thresholds towards physiological membrane potentials, leading to the opening of the channel. In addition to its critical role in temperature sensing, regulates basal tear secretion by sensing evaporation-induced cooling and changes in osmolality. The sequence is that of Transient receptor potential cation channel subfamily M member 8 (Trpm8) from Rattus norvegicus (Rat).